Here is an 86-residue protein sequence, read N- to C-terminus: Small ribosomal subunit protein uS17 (86 aa).

The protein belongs to the universal ribosomal protein uS17 family. Part of the 30S ribosomal subunit.

One of the primary rRNA binding proteins, it binds specifically to the 5'-end of 16S ribosomal RNA. The protein is Small ribosomal subunit protein uS17 of Caldicellulosiruptor saccharolyticus (strain ATCC 43494 / DSM 8903 / Tp8T 6331).